The chain runs to 413 residues: Serine hydroxymethyltransferase (413 aa).

(6S)-5,6,7,8-tetrahydrofolate-binding positions include Leu-117 and Gly-121–Leu-123. Position 226 is an N6-(pyridoxal phosphate)lysine (Lys-226). Ser-349–Phe-351 provides a ligand contact to (6S)-5,6,7,8-tetrahydrofolate.

The protein belongs to the SHMT family. Homodimer. Requires pyridoxal 5'-phosphate as cofactor.

The protein resides in the cytoplasm. The enzyme catalyses (6R)-5,10-methylene-5,6,7,8-tetrahydrofolate + glycine + H2O = (6S)-5,6,7,8-tetrahydrofolate + L-serine. Its pathway is one-carbon metabolism; tetrahydrofolate interconversion. It participates in amino-acid biosynthesis; glycine biosynthesis; glycine from L-serine: step 1/1. Functionally, catalyzes the reversible interconversion of serine and glycine with tetrahydrofolate (THF) serving as the one-carbon carrier. This reaction serves as the major source of one-carbon groups required for the biosynthesis of purines, thymidylate, methionine, and other important biomolecules. Also exhibits THF-independent aldolase activity toward beta-hydroxyamino acids, producing glycine and aldehydes, via a retro-aldol mechanism. This is Serine hydroxymethyltransferase from Listeria monocytogenes serovar 1/2a (strain ATCC BAA-679 / EGD-e).